The following is a 232-amino-acid chain: Orotidine 5'-phosphate decarboxylase (232 aa).

Substrate contacts are provided by residues aspartate 11, lysine 33, 60–69 (DLKFHDIPNT), threonine 120, arginine 181, glutamine 190, glycine 210, and arginine 211. The active-site Proton donor is the lysine 62.

The protein belongs to the OMP decarboxylase family. Type 1 subfamily. Homodimer.

It carries out the reaction orotidine 5'-phosphate + H(+) = UMP + CO2. It functions in the pathway pyrimidine metabolism; UMP biosynthesis via de novo pathway; UMP from orotate: step 2/2. In terms of biological role, catalyzes the decarboxylation of orotidine 5'-monophosphate (OMP) to uridine 5'-monophosphate (UMP). This chain is Orotidine 5'-phosphate decarboxylase, found in Vibrio vulnificus (strain YJ016).